A 504-amino-acid chain; its full sequence is Occludin (504 aa).

Over 1-57 (MFSKKSYDGPPAGYGPPTGYGAPTADYGYGSPPPGSYYVDDAPQLFYKWTSPPGAVR) the chain is Cytoplasmic. The MARVEL domain occupies 51–253 (SPPGAVRGLQ…ICFFAQKTRS (203 aa)). Residues 58-80 (GLQAGVLVLCIAIFACVASTLAW) form a helical membrane-spanning segment. Residues 81–123 (DYGYGLGGAYGTGLGGFYGSNYYGSGLSYSYGYGGYYGGVNQR) are Extracellular-facing. A helical membrane pass occupies residues 124-148 (TANGFMIAMAVLCFLAQLGLLVAAL). Residues 149–158 (SKSGATRSRR) are Cytoplasmic-facing. The helical transmembrane segment at 159–183 (FYLAVLVLSAVLAFVMLIASIVYIM) threads the bilayer. Residues 184-227 (GVNPQAQMSSGYYYSPLLAMCSQAYGSTYLNQYIYHYCTVDPQE) are Extracellular-facing. Cys204 and Cys221 are disulfide-bonded. The helical transmembrane segment at 228 to 249 (AVAAVCGFLIVILLCLICFFAQ) threads the bilayer. Topologically, residues 250-504 (KTRSKIWRYG…MVSAYDKVRG (255 aa)) are cytoplasmic. The segment at 324–396 (PSGTYSSRGD…VESSDERDQE (73 aa)) is disordered. Positions 361 to 370 (PARRGRRRRR) are enriched in basic residues. Phosphotyrosine is present on residues Tyr379 and Tyr383. An interaction with TJP1 region spans residues 379–385 (YETDYTT). The 109-residue stretch at 396-504 (EQWASLYPPI…MVSAYDKVRG (109 aa)) folds into the OCEL domain. Residues 412 to 471 (QRYKQEFDTDLKRYKQLCAEMDSINDRLNQLSRRLDSITEDSPQYQDVAEEYNQLKDLKR) are a coiled coil.

The protein belongs to the ELL/occludin family. Interacts with TJP1 and TJP3. Post-translationally, phosphorylated. As to expression, localized at tight junctions of both epithelial and endothelial cells. Highly expressed in lung and liver. Expressed at a lower level in brain.

The protein resides in the cell membrane. The protein localises to the cell junction. Its subcellular location is the tight junction. Its function is as follows. May play a role in the formation and regulation of the tight junction (TJ) paracellular permeability barrier. Interacts with ZO-1. The protein is Occludin (OCLN) of Gallus gallus (Chicken).